A 365-amino-acid polypeptide reads, in one-letter code: 3-isopropylmalate dehydrogenase (365 aa).

80 to 91 (GPKWGTGAVRPE) contacts NAD(+). Arg98, Arg108, Arg137, and Asp226 together coordinate substrate. Positions 226, 251, and 255 each coordinate Mg(2+). 290 to 301 (GSAPDLPKGKVN) contributes to the NAD(+) binding site.

Belongs to the isocitrate and isopropylmalate dehydrogenases family. Homodimer. Requires Mg(2+) as cofactor. Mn(2+) is required as a cofactor.

The protein localises to the cytoplasm. It catalyses the reaction (2R,3S)-3-isopropylmalate + NAD(+) = 4-methyl-2-oxopentanoate + CO2 + NADH. It functions in the pathway amino-acid biosynthesis; L-leucine biosynthesis; L-leucine from 3-methyl-2-oxobutanoate: step 3/4. Functionally, catalyzes the oxidation of 3-carboxy-2-hydroxy-4-methylpentanoate (3-isopropylmalate) to 3-carboxy-4-methyl-2-oxopentanoate. The product decarboxylates to 4-methyl-2 oxopentanoate. The sequence is that of 3-isopropylmalate dehydrogenase (LEU2) from Candida glabrata (strain ATCC 2001 / BCRC 20586 / JCM 3761 / NBRC 0622 / NRRL Y-65 / CBS 138) (Yeast).